We begin with the raw amino-acid sequence, 391 residues long: Ferrochelatase (391 aa).

Histidine 196 and glutamate 281 together coordinate Fe cation.

Belongs to the ferrochelatase family.

It localises to the cytoplasm. The enzyme catalyses heme b + 2 H(+) = protoporphyrin IX + Fe(2+). Its pathway is porphyrin-containing compound metabolism; protoheme biosynthesis; protoheme from protoporphyrin-IX: step 1/1. Catalyzes the ferrous insertion into protoporphyrin IX. This is Ferrochelatase from Parasynechococcus marenigrum (strain WH8102).